The sequence spans 796 residues: Vacuolar protein sorting-associated protein 35 (796 aa).

Residue serine 7 is modified to Phosphoserine. Interaction with SNX3 regions lie at residues 25–44 (VQSF…DALK) and 205–215 (DREKRERERQE). Positions 438-796 (CYVLSNVLDY…EGPIYEGLIL (359 aa)) are interaction with SLC11A2. Residues 500 to 693 (SEDPDQQYLI…DKNGEELHGG (194 aa)) are interaction with IGF2R cytoplasmic domain. Serine 783 carries the post-translational modification Phosphoserine. At tyrosine 791 the chain carries Phosphotyrosine.

The protein belongs to the VPS35 family. Component of the heterotrimeric retromer cargo-selective complex (CSC), also decribed as vacuolar protein sorting subcomplex (VPS), formed by VPS26 (VPS26A or VPS26B), VPS29 and VPS35. The CSC has a highly elongated structure with VPS26 and VPS29 binding independently at opposite distal ends of VPS35 as central platform. The CSC is believed to associate with variable sorting nexins to form functionally distinct retromer complex variants. The originally described retromer complex (also called SNX-BAR retromer) is a pentamer containing the CSC and a heterodimeric membrane-deforming subcomplex formed between SNX1 or SNX2 and SNX5 or SNX6 (also called SNX-BAR subcomplex); the respective CSC and SNX-BAR subcomplexes associate with low affinity. The CSC associates with SNX3 to form a SNX3-retromer complex. The CSC associates with SNX27, the WASH complex and the SNX-BAR subcomplex to form the SNX27-retromer complex. Interacts with VPS26A, VPS26B, VPS29, SNX1, SNX2, IGF2R, SNX3, GOLPH3, LRRK2, SLC11A2, WASHC2A, WASHC2C, FKBP15, WASHC1, RAB7A, SNX27, WASHC5, EHD1. Interacts with MAGEL2; leading to recruitment of the TRIM27:MAGEL2 E3 ubiquitin ligase complex retromer-containing endosomes. Interacts with SORCS2. As to quaternary structure, (Microbial infection) Interacts with human papillomavirus 16 minor capsid protein L2 (via C-terminus); this interaction mediates the transport of the capsid from the early endosome to the Golgi apparatus. As to expression, ubiquitous. Highly expressed in heart, brain, placenta, skeletal muscle, spleen, thymus, testis, ovary, small intestine, kidney and colon.

It localises to the cytoplasm. The protein resides in the membrane. It is found in the endosome. The protein localises to the early endosome. Its subcellular location is the late endosome. In terms of biological role, acts as a component of the retromer cargo-selective complex (CSC). The CSC is believed to be the core functional component of retromer or respective retromer complex variants acting to prevent missorting of selected transmembrane cargo proteins into the lysosomal degradation pathway. The recruitment of the CSC to the endosomal membrane involves RAB7A and SNX3. The CSC seems to associate with the cytoplasmic domain of cargo proteins predominantly via VPS35; however, these interactions seem to be of low affinity and retromer SNX proteins may also contribute to cargo selectivity thus questioning the classical function of the CSC. The SNX-BAR retromer mediates retrograde transport of cargo proteins from endosomes to the trans-Golgi network (TGN) and is involved in endosome-to-plasma membrane transport for cargo protein recycling. The SNX3-retromer mediates the retrograde endosome-to-TGN transport of WLS distinct from the SNX-BAR retromer pathway. The SNX27-retromer is believed to be involved in endosome-to-plasma membrane trafficking and recycling of a broad spectrum of cargo proteins. The CSC seems to act as recruitment hub for other proteins, such as the WASH complex and TBC1D5. Required for retrograde transport of lysosomal enzyme receptor IGF2R and SLC11A2. Required to regulate transcytosis of the polymeric immunoglobulin receptor (pIgR-pIgA). Required for endosomal localization of WASHC2C. Mediates the association of the CSC with the WASH complex via WASHC2. Required for the endosomal localization of TBC1D5. (Microbial infection) The heterotrimeric retromer cargo-selective complex (CSC) mediates the exit of human papillomavirus from the early endosome and the delivery to the Golgi apparatus. The protein is Vacuolar protein sorting-associated protein 35 of Homo sapiens (Human).